Consider the following 336-residue polypeptide: Glutamyl endopeptidase (336 aa).

A signal peptide spans 1–29; the sequence is MKGKFLKVSSLFVATLTTATLVSSPAANA. Residues 30–68 constitute a propeptide that is removed on maturation; that stretch reads LSSKAMDNHPQQTQSSKQQTPKIQKGGNLKPLEQREHAN. Residues 34–61 form a disordered region; that stretch reads AMDNHPQQTQSSKQQTPKIQKGGNLKPL. A compositionally biased stretch (low complexity) spans 39–51; the sequence is PQQTQSSKQQTPK. Active-site charge relay system residues include His119, Asp161, and Ser237. Residues 283 to 336 are disordered; the sequence is FANDDQPNNPDNPDNPNNPDNPNNPDEPNNPDNPNNPDNPDNGDTNNSDNPDAA. Residues 286–336 show a composition bias toward low complexity; that stretch reads DDQPNNPDNPDNPNNPDNPNNPDEPNNPDNPNNPDNPDNGDTNNSDNPDAA. A run of 11 repeats spans residues 289-291, 292-294, 295-297, 298-300, 301-303, 304-306, 310-312, 313-315, 316-318, 319-321, and 322-324. An 11 X 3 AA repeats of P-[DN]-N region spans residues 289–324; it reads PNNPDNPDNPNNPDNPNNPDEPNNPDNPNNPDNPDN.

This sequence belongs to the peptidase S1B family. Post-translationally, proteolytically cleaved by aureolysin (aur). This cleavage leads to the activation of SspA.

The protein localises to the secreted. The catalysed reaction is Preferential cleavage: Glu-|-Xaa, Asp-|-Xaa.. Its function is as follows. Preferentially cleaves peptide bonds on the carboxyl-terminal side of aspartate and glutamate. Along with other extracellular proteases it is involved in colonization and infection of human tissues. Required for proteolytic maturation of thiol protease SspB and inactivation of SspC, an inhibitor of SspB. It is the most important protease for degradation of fibronectin-binding protein (FnBP) and surface protein A, which are involved in adherence to host cells. May also protect bacteria against host defense mechanism by cleaving the immunoglobulin classes IgG, IgA and IgM. May be involved in the stability of secreted lipases. In Staphylococcus aureus (strain COL), this protein is Glutamyl endopeptidase (sspA).